The primary structure comprises 518 residues: MPITSNEISVEVNGQQYTLPAGSTLGDALKVSRAPYIAGTAVGILKEVAEEKIEIVTEYAINTPRGEFRIEINNPESPSGKLWAEHFKEYEGKSIHWASPEALAFGPFEAEIKPSRETGSFEAFEVMFGAGGFDPHNTHLIFSLKRHTAEYGTPEDGVFAEVVTGRKILSRLSREDTILGIEPIIEWEQISEKNCTTDLSVPLEDGNSIFTYFEVELSRNAPKGAEHFYALTREGTLNVDVTTSSFISDDGLKGVTAPYENFEPRREGAISVRTVGYGLGRIYISREERPSSLVHSVVGQVTKGIELIKLAEEGQKLSVESLPPQIVLLGHSFEEAGLVLSSIGVELIKDGYTGEDAVIVSQDPPTTLEILGEAKVTAYAVPRDKLIEIELYPEKAPKSVDFFRHGLELKTKTVGKLPVYMIYDDTYLFKTEKEVVKYKEILPENTPTDKVLGGEIGITNQAAKRMGTIGVRLGDDELFGPTGERFSSTNIVGRIINPEKLLAVKEGDVIYVTEIVRK.

The protein belongs to the UPF0288 family.

In Methanosarcina barkeri (strain Fusaro / DSM 804), this protein is UPF0288 protein Mbar_A0706.